Consider the following 557-residue polypeptide: Aerobic glycerol-3-phosphate dehydrogenase (557 aa).

Position 21–49 (21–49 (DLVIIGGGITGAGIALDASERGMKVALVE)) interacts with FAD.

It belongs to the FAD-dependent glycerol-3-phosphate dehydrogenase family. The cofactor is FAD.

Its subcellular location is the cytoplasm. It carries out the reaction a quinone + sn-glycerol 3-phosphate = dihydroxyacetone phosphate + a quinol. The protein operates within polyol metabolism; glycerol degradation via glycerol kinase pathway; glycerone phosphate from sn-glycerol 3-phosphate (aerobic route): step 1/1. The sequence is that of Aerobic glycerol-3-phosphate dehydrogenase (glpD) from Staphylococcus aureus (strain MRSA252).